A 632-amino-acid chain; its full sequence is MISPLLQHISSPQKLRSLSLDQLPLLCDEIRNRIIATLSLTGGHLASNLGIVELTVALHYVFASPEDQFIFDVGHQAYVHKLLTGRNTEAFSNIRHDNGLSGFTSPQESNHDIFFSGHAGNALSLALGLAKGASHGSSHILPILGDAAFSCGLTLEALNNVPSDLSKFIIVLNDNQMSISENVGNIPQGISQWIQPPKFDKIFQKIHSWMRKIPGFSRQKSELLHKVDIALKSLSHPLFEQFGIHYVGPFDGHNIKKLIPALEAVKGLPYPVLFHVCTAKGNGLAEAEKDPALYHGVKAYFKNHSPKKKPLSSEVKTPSSFPQHVGHILCQLGEKHPRLQVVTPAMSLGSCLEDFRKQFPDRFTDVGIAEGHAVTFSAGIARSGTPVVCSIYSTFLNRAMDNVFHDVCMQELPVIFAIDRAGLAFHDGRSHHGIYDLGFLCSMPNMVVCQPRNASVLERLLFSSLLWKSPCAIRYPNLSTRKEVSNPSFSPIFPGEAEVLCQGDDLLLIALGHMCDTALAVKEQLLDHGISTTVVDPIFIKPLDTELLQTLLSHHSKVVVLEEHSIHGGLSAEFLLFLNNHNLKTDVLSLGIPDIFIPHGNPETILNMIGLTSDQITLKILAHFNFSAPIPI.

Thiamine diphosphate contacts are provided by residues His-75 and 117–119 (GHA). Residue Asp-146 participates in Mg(2+) binding. Thiamine diphosphate is bound by residues 147-148 (AA), Asn-175, and Glu-370. Asn-175 serves as a coordination point for Mg(2+).

Belongs to the transketolase family. DXPS subfamily. Homodimer. It depends on Mg(2+) as a cofactor. The cofactor is thiamine diphosphate.

The catalysed reaction is D-glyceraldehyde 3-phosphate + pyruvate + H(+) = 1-deoxy-D-xylulose 5-phosphate + CO2. Its pathway is metabolic intermediate biosynthesis; 1-deoxy-D-xylulose 5-phosphate biosynthesis; 1-deoxy-D-xylulose 5-phosphate from D-glyceraldehyde 3-phosphate and pyruvate: step 1/1. Functionally, catalyzes the acyloin condensation reaction between C atoms 2 and 3 of pyruvate and glyceraldehyde 3-phosphate to yield 1-deoxy-D-xylulose-5-phosphate (DXP). In Chlamydia muridarum (strain MoPn / Nigg), this protein is 1-deoxy-D-xylulose-5-phosphate synthase.